The primary structure comprises 269 residues: MATH domain and coiled-coil domain-containing protein At2g01790 (269 aa).

The 129-residue stretch at 6 to 134 folds into the MATH domain; it reads AVKKLWVINN…NGEVDIVAEV (129 aa). A coiled-coil region spans residues 228–269; that stretch reads KLDWLEKKLKETGKSRLQEIEEDLKDLKVKCADMDALLEFLR.

In Arabidopsis thaliana (Mouse-ear cress), this protein is MATH domain and coiled-coil domain-containing protein At2g01790.